Consider the following 323-residue polypeptide: tRNA dimethylallyltransferase (323 aa).

13 to 20 (GPTASGKT) serves as a coordination point for ATP. 15 to 20 (TASGKT) contacts substrate. 4 interaction with substrate tRNA regions span residues 42–45 (DSAL), 166–170 (QRIQR), 251–256 (RCVGYR), and 284–291 (KRQITWLR).

It belongs to the IPP transferase family. Monomer. Mg(2+) serves as cofactor.

It catalyses the reaction adenosine(37) in tRNA + dimethylallyl diphosphate = N(6)-dimethylallyladenosine(37) in tRNA + diphosphate. In terms of biological role, catalyzes the transfer of a dimethylallyl group onto the adenine at position 37 in tRNAs that read codons beginning with uridine, leading to the formation of N6-(dimethylallyl)adenosine (i(6)A). The sequence is that of tRNA dimethylallyltransferase from Acidovorax sp. (strain JS42).